The sequence spans 1499 residues: Rap guanine nucleotide exchange factor 2 (1499 aa).

Disordered regions lie at residues 40–59 and 68–101; these read HVSSSHSGCSITSDSGSSSL and SEAGDMDLSGLPETAVDSEDDDDEEDIERASDPL. Positions 83-94 are enriched in acidic residues; sequence VDSEDDDDEEDI. 135 to 254 contributes to the a nucleoside 3',5'-cyclic phosphate binding site; that stretch reads AFANMTMSVR…VEEEGEIVMV (120 aa). The 114-residue stretch at 267-380 folds into the N-terminal Ras-GEF domain; sequence KGHIVIKGTS…RLLNIACAAK (114 aa). One can recognise a PDZ domain in the interval 385-470; the sequence is LMTLTKPSRE…ITVKTNLFVF (86 aa). Phosphoserine is present on serine 501. In terms of domain architecture, Ras-associating spans 606 to 692; the sequence is PDQVLRVFKA…GRYYLKNNME (87 aa). At threonine 644 the chain carries Phosphothreonine; by PLK2. One can recognise a Ras-GEF domain in the interval 717-944; it reads STVEVATQLS…SQGSTNATVL (228 aa). The residue at position 806 (serine 806) is a Phosphoserine; by PLK2. At serine 930 the chain carries Phosphoserine. Serine 933 carries the phosphoserine; by PLK2 modification. The segment at 1002–1050 is disordered; sequence PATNTLPKNPGDKKPVKSETSPVAPRAGSQQKAQSLPQPQQQPPPAHKI. A Phosphoserine modification is found at serine 1022. The span at 1031–1040 shows a compositional bias: low complexity; that stretch reads QQKAQSLPQP. Serine 1080, serine 1089, serine 1095, serine 1116, serine 1120, and serine 1159 each carry phosphoserine. The segment at 1095-1160 is disordered; sequence SLERHKKQAE…RSSIVSNSSF (66 aa). Low complexity-rich tracts occupy residues 1111–1125 and 1141–1160; these read SSQLSSPPTSPQSSP and SDSGHSEISSRSSIVSNSSF. Serine 1176 is subject to Phosphoserine; by PLK2. Disordered stretches follow at residues 1224–1256 and 1305–1499; these read PSTEELSQDQGDRASLDAADSGRGSWTSCSSGS and TKYN…VSAV. 2 stretches are compositionally biased toward polar residues: residues 1247 to 1256 and 1307 to 1331; these read GSWTSCSSGS and YNRQNQSRESLEQAQSRASWASSTG. Residues 1355 to 1366 are compositionally biased toward low complexity; the sequence is EAESSSLTSVTT. Over residues 1441–1462 the composition is skewed to polar residues; the sequence is SSDTAGPSSVQQPHGHPTSSRP. The span at 1488–1499 shows a compositional bias: acidic residues; that stretch reads TEEDEDEQVSAV.

The protein belongs to the RAPGEF2 family. Interacts with CDH1, CTNNB1 and TJP1. Interacts (via C-terminal domain) with MAGI2 (via PDZ and WW domains); the interaction occurs before or after NGF stimulation. Interacts with KIDINS220 and NTRK1; the interactions occur after NGF stimulation. Found in a complex, at least composed of KIDINS220, MAGI2, NTRK1 and RAPGEF2; the complex is mainly formed at late endosomes in a neuronal growth factor (NGF)-dependent manner. Interacts (via C-terminal domain) with NEDD4 (via WW domains); this interaction leads to ubiquitination and degradation via the proteasome pathway in a cAMP-independent manner. Interacts with MAGI1 isoform 3 (via PDZ domain). Interacts with ADRB1 (via C-terminal PDZ motif); the interaction is direct. Interacts (via Ras-associating domain) with RAP1A (via GTP-bound active form). Interacts weakly with HRAS (via GDP- and GTP-bound forms). Interacts (via C-terminal domain) with MAGI2 (via PDZ and WW domains). Post-translationally, ubiquitinated by NEDD4, leading to proteasomal degradation. Phosphorylation by PLK2 promotes its activity. In terms of tissue distribution, expressed in primary neuronal and endocrine cells (at protein level). Highest expression levels in brain. Lower expression levels in heart, kidney, lung, placenta and blood leukocytes.

The protein localises to the cytoplasm. It is found in the perinuclear region. It localises to the cell membrane. The protein resides in the late endosome. Its subcellular location is the cell junction. In terms of biological role, functions as a guanine nucleotide exchange factor (GEF), which activates Rap and Ras family of small GTPases by exchanging bound GDP for free GTP in a cAMP-dependent manner. Serves as a link between cell surface receptors and Rap/Ras GTPases in intracellular signaling cascades. Also acts as an effector for Rap1 by direct association with Rap1-GTP thereby leading to the amplification of Rap1-mediated signaling. Shows weak activity on HRAS. It is controversial whether RAPGEF2 binds cAMP and cGMP or not. Its binding to ligand-activated beta-1 adrenergic receptor ADRB1 leads to the Ras activation through the G(s)-alpha signaling pathway. Involved in the cAMP-induced Ras and Erk1/2 signaling pathway that leads to sustained inhibition of long term melanogenesis by reducing dendrite extension and melanin synthesis. Also provides inhibitory signals for cell proliferation of melanoma cells and promotes their apoptosis in a cAMP-independent nanner. Regulates cAMP-induced neuritogenesis by mediating the Rap1/B-Raf/ERK signaling through a pathway that is independent on both PKA and RAPGEF3/RAPGEF4. Involved in neuron migration and in the formation of the major forebrain fiber connections forming the corpus callosum, the anterior commissure and the hippocampal commissure during brain development. Involved in neuronal growth factor (NGF)-induced sustained activation of Rap1 at late endosomes and in brain-derived neurotrophic factor (BDNF)-induced axon outgrowth of hippocampal neurons. Plays a role in the regulation of embryonic blood vessel formation and in the establishment of basal junction integrity and endothelial barrier function. May be involved in the regulation of the vascular endothelial growth factor receptor KDR and cadherin CDH5 expression at allantois endothelial cell-cell junctions. The polypeptide is Rap guanine nucleotide exchange factor 2 (RAPGEF2) (Homo sapiens (Human)).